We begin with the raw amino-acid sequence, 426 residues long: UDP-N-acetylglucosamine 1-carboxyvinyltransferase (426 aa).

22 to 23 (KN) lines the phosphoenolpyruvate pocket. Arg-93 serves as a coordination point for UDP-N-acetyl-alpha-D-glucosamine. Cys-117 acts as the Proton donor in catalysis. The residue at position 117 (Cys-117) is a 2-(S-cysteinyl)pyruvic acid O-phosphothioketal. UDP-N-acetyl-alpha-D-glucosamine-binding positions include 162–165 (KVSV), Asp-307, and Ile-329.

This sequence belongs to the EPSP synthase family. MurA subfamily.

The protein localises to the cytoplasm. It catalyses the reaction phosphoenolpyruvate + UDP-N-acetyl-alpha-D-glucosamine = UDP-N-acetyl-3-O-(1-carboxyvinyl)-alpha-D-glucosamine + phosphate. The protein operates within cell wall biogenesis; peptidoglycan biosynthesis. Its function is as follows. Cell wall formation. Adds enolpyruvyl to UDP-N-acetylglucosamine. The protein is UDP-N-acetylglucosamine 1-carboxyvinyltransferase of Haemophilus ducreyi (strain 35000HP / ATCC 700724).